We begin with the raw amino-acid sequence, 439 residues long: Dihydroorotate dehydrogenase (quinone), mitochondrial (439 aa).

A mitochondrion-targeting transit peptide spans 1 to 22 (MMHRVGFNVIGRRSFFTVNARR). Residues 37 to 53 (LTALLLAGSAGYLYFMN) form a helical membrane-spanning segment. FMN-binding positions include 119 to 123 (AGLDK) and Ser-143. Lys-123 is a binding site for substrate. 168 to 172 (NRYGF) provides a ligand contact to substrate. FMN-binding residues include Asn-215 and Asn-245. 245–250 (NVSSPN) serves as a coordination point for substrate. Catalysis depends on Ser-248, which acts as the Nucleophile. The FMN site is built by Lys-296 and Ser-324. Residue 325–326 (NT) coordinates substrate. FMN contacts are provided by residues Gly-350, Gly-380, and 401 to 402 (YT).

It belongs to the dihydroorotate dehydrogenase family. Type 2 subfamily. The cofactor is FMN.

Its subcellular location is the mitochondrion inner membrane. It catalyses the reaction (S)-dihydroorotate + a quinone = orotate + a quinol. It participates in pyrimidine metabolism; UMP biosynthesis via de novo pathway; orotate from (S)-dihydroorotate (quinone route): step 1/1. Its function is as follows. Catalyzes the conversion of dihydroorotate to orotate with quinone as electron acceptor. In Candida glabrata (strain ATCC 2001 / BCRC 20586 / JCM 3761 / NBRC 0622 / NRRL Y-65 / CBS 138) (Yeast), this protein is Dihydroorotate dehydrogenase (quinone), mitochondrial (URA9).